Consider the following 292-residue polypeptide: tRNA dimethylallyltransferase (292 aa).

An ATP-binding site is contributed by 10–17 (GPTASGKS). 12–17 (TASGKS) lines the substrate pocket. Interaction with substrate tRNA regions lie at residues 35–38 (DSMQ) and 159–163 (QRIVR).

This sequence belongs to the IPP transferase family. As to quaternary structure, monomer. Mg(2+) serves as cofactor.

The catalysed reaction is adenosine(37) in tRNA + dimethylallyl diphosphate = N(6)-dimethylallyladenosine(37) in tRNA + diphosphate. Functionally, catalyzes the transfer of a dimethylallyl group onto the adenine at position 37 in tRNAs that read codons beginning with uridine, leading to the formation of N6-(dimethylallyl)adenosine (i(6)A). This chain is tRNA dimethylallyltransferase, found in Chelativorans sp. (strain BNC1).